The following is a 249-amino-acid chain: RNA polymerase sigma factor SigI3 (249 aa).

The short motif at 60–73 is the Polymerase core binding element; it reads EEFSIGLAAFNEAI. Positions 199–218 form a DNA-binding region, H-T-H motif; sequence MKEVLSRIKVNHKTIQRNRK.

It belongs to the sigma-70 factor family. SigI subfamily. In terms of assembly, interacts with RsgI3.

The protein localises to the cytoplasm. Negatively regulated by the anti-sigma-I factor RsgI3. Binding of the polysaccharide substrate to RsgI3 may lead to the release and activation of SigI3. Sigma factors are initiation factors that promote the attachment of RNA polymerase to specific initiation sites and are then released. This sigma factor is involved in regulation of cellulosomal genes via an external polysaccharide-sensing mechanism. Recognizes the predicted promoters associated with sigI3 itself, pl11, ce12 and cipA. The polypeptide is RNA polymerase sigma factor SigI3 (Acetivibrio thermocellus (strain ATCC 27405 / DSM 1237 / JCM 9322 / NBRC 103400 / NCIMB 10682 / NRRL B-4536 / VPI 7372) (Clostridium thermocellum)).